We begin with the raw amino-acid sequence, 298 residues long: Oxygen-dependent coproporphyrinogen-III oxidase (298 aa).

Residue Ser-92 coordinates substrate. 2 residues coordinate a divalent metal cation: His-96 and His-106. Catalysis depends on His-106, which acts as the Proton donor. Residue 108 to 110 (NVR) coordinates substrate. 2 residues coordinate a divalent metal cation: His-145 and His-175. The important for dimerization stretch occupies residues 239–274 (YVEFNLVYDRGTLFGLQSGGRSESILMSLPPRVRWE). 257 to 259 (GGR) serves as a coordination point for substrate.

Belongs to the aerobic coproporphyrinogen-III oxidase family. Homodimer. It depends on a divalent metal cation as a cofactor.

It is found in the cytoplasm. It catalyses the reaction coproporphyrinogen III + O2 + 2 H(+) = protoporphyrinogen IX + 2 CO2 + 2 H2O. It functions in the pathway porphyrin-containing compound metabolism; protoporphyrin-IX biosynthesis; protoporphyrinogen-IX from coproporphyrinogen-III (O2 route): step 1/1. In terms of biological role, involved in the heme biosynthesis. Catalyzes the aerobic oxidative decarboxylation of propionate groups of rings A and B of coproporphyrinogen-III to yield the vinyl groups in protoporphyrinogen-IX. The sequence is that of Oxygen-dependent coproporphyrinogen-III oxidase from Stenotrophomonas maltophilia (strain R551-3).